A 283-amino-acid polypeptide reads, in one-letter code: Bifunctional protein FolD (283 aa).

Residues 164–166 (GRS), serine 189, and isoleucine 230 contribute to the NADP(+) site.

This sequence belongs to the tetrahydrofolate dehydrogenase/cyclohydrolase family. Homodimer.

It catalyses the reaction (6R)-5,10-methylene-5,6,7,8-tetrahydrofolate + NADP(+) = (6R)-5,10-methenyltetrahydrofolate + NADPH. The enzyme catalyses (6R)-5,10-methenyltetrahydrofolate + H2O = (6R)-10-formyltetrahydrofolate + H(+). It functions in the pathway one-carbon metabolism; tetrahydrofolate interconversion. Functionally, catalyzes the oxidation of 5,10-methylenetetrahydrofolate to 5,10-methenyltetrahydrofolate and then the hydrolysis of 5,10-methenyltetrahydrofolate to 10-formyltetrahydrofolate. The chain is Bifunctional protein FolD from Pelobacter propionicus (strain DSM 2379 / NBRC 103807 / OttBd1).